The sequence spans 158 residues: Persistence and stress-resistance toxin PasT (158 aa).

The required for resistance of nitrosative stress but not persistence or toxic effects stretch occupies residues 70-158; sequence GISKTFTTRN…VRAKEVYSAR (89 aa).

This sequence belongs to the ribosome association toxin RatA family. In terms of assembly, associates with 50S ribosomes.

Its function is as follows. Toxic component of a type II toxin-antitoxin (TA) system. Binds to 50S ribosomal subunits, preventing them from associating with 30S subunits to form 70S ribosomes. In this strain of E.coli low levels of PasT complement operon disruption, however high levels are toxic; their effects are abrogated by high level expression of cognate antitoxin PasI. Plays a role in persistence after antibiotic exposure and survival of nitrosative stress; the toxic and persistence phenotypes are conferred by the same N-terminal region of the protein, while the stress resistance effects can be uncoupled from them in deletion mutants. The protein is Persistence and stress-resistance toxin PasT (pasT) of Escherichia coli O6:H1 (strain CFT073 / ATCC 700928 / UPEC).